The primary structure comprises 73 residues: Disintegrin trigramin-gamma (73 aa).

Positions 1 to 73 (EAGEDCDCGS…AGCPRNPLHA (73 aa)) constitute a Disintegrin domain. 6 disulfides stabilise this stretch: cysteine 6–cysteine 21, cysteine 8–cysteine 16, cysteine 15–cysteine 38, cysteine 29–cysteine 35, cysteine 34–cysteine 59, and cysteine 47–cysteine 66. The short motif at 51-53 (RGD) is the Cell attachment site element.

It belongs to the venom metalloproteinase (M12B) family. P-II subfamily. P-IIa sub-subfamily. As to quaternary structure, monomer (disintegrin). As to expression, expressed by the venom gland.

It is found in the secreted. Functionally, inhibits fibrinogen interaction with platelets. Acts by binding to alpha-IIb/beta-3 (ITGA2B/ITGB3) on the platelet surface and inhibits aggregation induced by ADP, thrombin, platelet-activating factor and collagen. The chain is Disintegrin trigramin-gamma from Craspedocephalus gramineus (Bamboo pit viper).